We begin with the raw amino-acid sequence, 130 residues long: Large ribosomal subunit protein bL17 (130 aa).

Belongs to the bacterial ribosomal protein bL17 family. As to quaternary structure, part of the 50S ribosomal subunit. Contacts protein L32.

This Shewanella pealeana (strain ATCC 700345 / ANG-SQ1) protein is Large ribosomal subunit protein bL17.